The sequence spans 775 residues: Acetamidase regulatory protein (775 aa).

Residues 1–15 (MSSTAHNSQPSTGNG) show a composition bias toward polar residues. The disordered stretch occupies residues 1 to 20 (MSSTAHNSQPSTGNGVTKRK). The zn(2)-C6 fungal-type DNA-binding region spans 26–59 (CIHCHRRKVRCDARIVGLPCSNCRSAGKADCRIH). Positions 126-153 (PHSSYTNGNHLSNNRGSQPITETQTFTR) are enriched in polar residues. Disordered regions lie at residues 126 to 159 (PHSSYTNGNHLSNNRGSQPITETQTFTRQPGADR) and 630 to 699 (ATSE…HQNQ). The span at 630-644 (ATSERPRRFSTHDQN) shows a compositional bias: basic and acidic residues. Positions 674–689 (PRPPYEVPTPESPRMP) are enriched in pro residues.

Its subcellular location is the nucleus. Positively regulates the expression of genes involved in the catabolism of certain amides, omega amino acids, and lactams. The polypeptide is Acetamidase regulatory protein (amdR) (Aspergillus oryzae (strain ATCC 42149 / RIB 40) (Yellow koji mold)).